The sequence spans 261 residues: ClpXP adapter protein SpxH (261 aa).

It belongs to the SpxH family. In terms of assembly, interacts with Spx.

The protein resides in the cytoplasm. In terms of biological role, adapter protein required for efficient degradation of Spx by ClpXP under non-stress conditions. Interaction with Spx stabilizes Spx and exposes the C-terminus of Spx for recognition and proteolysis by ClpXP. The polypeptide is ClpXP adapter protein SpxH (Staphylococcus aureus).